We begin with the raw amino-acid sequence, 111 residues long: Ribonuclease P protein component (111 aa).

It belongs to the RnpA family. Consists of a catalytic RNA component (M1 or rnpB) and a protein subunit.

It catalyses the reaction Endonucleolytic cleavage of RNA, removing 5'-extranucleotides from tRNA precursor.. Functionally, RNaseP catalyzes the removal of the 5'-leader sequence from pre-tRNA to produce the mature 5'-terminus. It can also cleave other RNA substrates such as 4.5S RNA. The protein component plays an auxiliary but essential role in vivo by binding to the 5'-leader sequence and broadening the substrate specificity of the ribozyme. In Borreliella afzelii (strain PKo) (Borrelia afzelii), this protein is Ribonuclease P protein component.